A 137-amino-acid polypeptide reads, in one-letter code: Small ribosomal subunit protein bS6 (137 aa).

It belongs to the bacterial ribosomal protein bS6 family.

Its function is as follows. Binds together with bS18 to 16S ribosomal RNA. The sequence is that of Small ribosomal subunit protein bS6 from Mycoplasma mycoides subsp. mycoides SC (strain CCUG 32753 / NCTC 10114 / PG1).